Consider the following 144-residue polypeptide: Large ribosomal subunit protein uL15 (144 aa).

The span at 1-18 shows a compositional bias: basic and acidic residues; it reads MRLNDLHPAEGSRPEGKR. A disordered region spans residues 1–58; it reads MRLNDLHPAEGSRPEGKRVGRGIGSGLGKTGGRGHKGQKSRSGGSVKPGFEGGQMPLQ. Residues 21–31 show a composition bias toward gly residues; it reads RGIGSGLGKTG.

The protein belongs to the universal ribosomal protein uL15 family. Part of the 50S ribosomal subunit.

Binds to the 23S rRNA. The chain is Large ribosomal subunit protein uL15 from Alcanivorax borkumensis (strain ATCC 700651 / DSM 11573 / NCIMB 13689 / SK2).